Here is a 1548-residue protein sequence, read N- to C-terminus: UDP-glucose:glycoprotein glucosyltransferase (1548 aa).

The signal sequence occupies residues 1–22 (MLRAVALCVSVVLIALYTPTSG). N-linked (GlcNAc...) asparagine glycosylation is present at Asn181. Basic and acidic residues predominate over residues 243 to 253 (TEYKSQDDAPK). Residues 243–265 (TEYKSQDDAPKPEAGSTSDEDLA) are disordered. N-linked (GlcNAc...) asparagine glycans are attached at residues Asn266 and Asn864. The glucosyltransferase stretch occupies residues 1227-1548 (SANQAATDED…PSHEPKHGEL (322 aa)). Basic and acidic residues predominate over residues 1512–1523 (EDHENSHSRDSA). The interval 1512 to 1548 (EDHENSHSRDSAVDDSVDDSVEVTTVTPSHEPKHGEL) is disordered. The Prevents secretion from ER signature appears at 1545–1548 (HGEL).

This sequence belongs to the glycosyltransferase 8 family. As to quaternary structure, monomer. May interact with CG7484/Sep15. It depends on Ca(2+) as a cofactor. The cofactor is Mn(2+).

The protein resides in the endoplasmic reticulum lumen. It is found in the endoplasmic reticulum-Golgi intermediate compartment. The enzyme catalyses N(4)-(alpha-D-Man-(1-&gt;2)-alpha-D-Man-(1-&gt;2)-alpha-D-Man-(1-&gt;3)-[alpha-D-Man-(1-&gt;2)-alpha-D-Man-(1-&gt;3)-[alpha-D-Man-(1-&gt;2)-alpha-D-Man-(1-&gt;6)]-alpha-D-Man-(1-&gt;6)]-beta-D-Man-(1-&gt;4)-beta-D-GlcNAc-(1-&gt;4)-beta-D-GlcNAc)-L-asparaginyl-[protein] (N-glucan mannose isomer 9A1,2,3B1,2,3) + UDP-alpha-D-glucose = N(4)-(alpha-D-Glc-(1-&gt;3)-alpha-D-Man-(1-&gt;2)-alpha-D-Man-(1-&gt;2)-alpha-D-Man-(1-&gt;3)-[alpha-D-Man-(1-&gt;2)-alpha-D-Man-(1-&gt;3)-[alpha-D-Man-(1-&gt;2)-alpha-D-Man-(1-&gt;6)]-alpha-D-Man-(1-&gt;6)]-beta-D-Man-(1-&gt;4)-beta-D-GlcNAc-(1-&gt;4)-beta-D-GlcNAc)-L-asparaginyl-[protein] + UDP + H(+). It functions in the pathway protein modification; protein glycosylation. Its function is as follows. Recognizes glycoproteins with minor folding defects. Reglucosylates single N-glycans near the misfolded part of the protein, thus providing quality control for protein folding in the endoplasmic reticulum. Reglucosylated proteins are recognized by calreticulin for recycling to the endoplasmic reticulum and refolding or degradation. This is UDP-glucose:glycoprotein glucosyltransferase from Drosophila melanogaster (Fruit fly).